A 345-amino-acid polypeptide reads, in one-letter code: Cytoskeleton protein RodZ (345 aa).

Residues Met-1–Gly-111 lie on the Cytoplasmic side of the membrane. The HTH cro/C1-type domain maps to Leu-19–Leu-79. A DNA-binding region (H-T-H motif) is located at residues Gln-30–Glu-49. A helical; Signal-anchor for type II membrane protein membrane pass occupies residues Trp-112–Trp-132. At Trp-133–Glu-345 the chain is on the periplasmic side. The tract at residues Ser-151 to Ser-259 is disordered. Over residues Pro-188–His-225 the composition is skewed to polar residues. The segment covering Ala-229 to Gln-241 has biased composition (low complexity).

The protein belongs to the RodZ family.

It localises to the cell inner membrane. Its function is as follows. Cytoskeletal protein that is involved in cell-shape control through regulation of the length of the long axis. This is Cytoskeleton protein RodZ from Yersinia pestis bv. Antiqua (strain Antiqua).